Consider the following 881-residue polypeptide: Lon protease (881 aa).

Positions 1–24 are enriched in basic and acidic residues; it reads MAKNTDIEHDAHEPAGHGDVRESA. The segment at 1 to 77 is disordered; the sequence is MAKNTDIEHD…RAGEAEKGVP (77 aa). Residues 49–59 are compositionally biased toward polar residues; that stretch reads QTDTESAQGAA. The segment covering 65-77 has biased composition (basic and acidic residues); that stretch reads EVQRAGEAEKGVP. Residues 94–287 form the Lon N-terminal domain; sequence VHLIPLTGRP…EVFVYIKKEK (194 aa). 440–447 is an ATP binding site; sequence GPPGVGKT. The Lon proteolytic domain maps to 679–861; that stretch reads ANKVGTAVGL…EEVLSLAFPK (183 aa). Catalysis depends on residues serine 767 and lysine 810.

The protein belongs to the peptidase S16 family. In terms of assembly, homohexamer. Organized in a ring with a central cavity.

It localises to the cytoplasm. The catalysed reaction is Hydrolysis of proteins in presence of ATP.. ATP-dependent serine protease that mediates the selective degradation of mutant and abnormal proteins as well as certain short-lived regulatory proteins. Required for cellular homeostasis and for survival from DNA damage and developmental changes induced by stress. Degrades polypeptides processively to yield small peptide fragments that are 5 to 10 amino acids long. Binds to DNA in a double-stranded, site-specific manner. In Treponema pallidum (strain Nichols), this protein is Lon protease.